The sequence spans 118 residues: MICOS complex subunit MIC13 (118 aa).

The Mitochondrial matrix portion of the chain corresponds to 1 to 7 (MVARVWS). Residues 8-26 (LMRFLIKGSVAGGAVYLVY) form a helical membrane-spanning segment. Residues 27–118 (DQELLGPSDK…GWEYVKARTK (92 aa)) lie on the Mitochondrial intermembrane side of the membrane.

Belongs to the MICOS complex subunit Mic13 family. In terms of assembly, component of the mitochondrial contact site and cristae organizing system (MICOS) complex, composed of at least MICOS10/MIC10, CHCHD3/MIC19, CHCHD6/MIC25, APOO/MIC26, MICOS13/MIC13, APOOL/MIC27 and IMMT/MIC60. The MICOS complex associates with mitochondrial outer membrane proteins SAMM50, MTX1 and MTX2 (together described as components of the mitochondrial outer membrane sorting assembly machinery (SAM) complex) and DNAJC11, mitochondrial inner membrane protein TMEM11 and with HSPA9. The MICOS and SAM complexes together with DNAJC11 are part of a large protein complex spanning both membranes termed the mitochondrial intermembrane space bridging (MIB) complex.

It is found in the mitochondrion inner membrane. In terms of biological role, component of the MICOS complex, a large protein complex of the mitochondrial inner membrane that plays crucial roles in the maintenance of crista junctions, inner membrane architecture, and formation of contact sites to the outer membrane. Constituent of mature MICOS complex, it is required for the formation of cristae junction (CJ) and maintenance of cristae morphology. Required for the incorporation of MICOS10/MIC10 into the MICOS complex. The protein is MICOS complex subunit MIC13 of Homo sapiens (Human).